Here is a 446-residue protein sequence, read N- to C-terminus: MSELATQKAGEGTVSRLLNVVESELQAGREKGDPTEKQLQIILEDAPLWQRFKEVTNEMIVTKNGRRMFPVLKISVTGLDPNAMYSLLLDFVRTDSHRWKYVNGEWVPAGKPEVSSHSCVYIHPDSPNFGAHWMKAPISFSKVKLTNKLNGGGQIMLNSLHKYEPQVHIVRVGGAHRMVMNCSFPETQFIAVTAYQNEEITALKIKYNPFAKAFLDAKERNHLKDVPEAISESQHVTYSHLGGWILSNPDGVCTAANSNYQYATPLPLPAPHTHHGCEHYAGLRGHRQAPYPSAYMHRNHSPSVNLIESSSNNLQVFSGPDSWTSLSSTPHASILSVPHSNGPINPGPSPYPCLWTISNGGGGPVASGSEVHASTSGTILLGNPAVTSPSSLLPTQATTSAGVEVLGEPSLTSIAVSTWTAVASHPLPGWGGPGGAGRHSSSSLDS.

The T-box DNA-binding region spans 43–216; sequence LEDAPLWQRF…YNPFAKAFLD (174 aa).

It is found in the nucleus. Its function is as follows. Transcriptional regulator involved in developmental processes. Can activate POMC gene expression and repress the alpha glycoprotein subunit and thyroid-stimulating hormone beta promoters. In Mus musculus (Mouse), this protein is T-box transcription factor TBX19.